The primary structure comprises 197 residues: Ras-related protein Rab-7B (197 aa).

GTP-binding positions include 14-21 (GEKSVGKT), 33-38 (VTLKPT), 57-61 (DTSGQ), 119-122 (NKID), and 152-153 (AK). An Effector region motif is present at residues 31-39 (RFVTLKPTI). 2 S-geranylgeranyl cysteine lipidation sites follow: cysteine 196 and cysteine 197.

It belongs to the small GTPase superfamily. Rab family.

Its function is as follows. Protein transport. Probably involved in vesicular traffic. This chain is Ras-related protein Rab-7B (rab7B), found in Dictyostelium discoideum (Social amoeba).